The chain runs to 375 residues: Chaperone protein DnaJ (375 aa).

The J domain maps to 5 to 70 (DYYEVLGVSR…QKRAAYDQFG (66 aa)). The segment at 131 to 209 (GTTVKIRVPS…CHGSGYVEEQ (79 aa)) adopts a CR-type zinc-finger fold. C144, C147, C161, C164, C183, C186, C197, and C200 together coordinate Zn(2+). 4 CXXCXGXG motif repeats span residues 144–151 (CKSCSGSG), 161–168 (CGTCNGAG), 183–190 (CPRCRGAG), and 197–204 (CRSCHGSG).

The protein belongs to the DnaJ family. In terms of assembly, homodimer. It depends on Zn(2+) as a cofactor.

The protein localises to the cytoplasm. Its function is as follows. Participates actively in the response to hyperosmotic and heat shock by preventing the aggregation of stress-denatured proteins and by disaggregating proteins, also in an autonomous, DnaK-independent fashion. Unfolded proteins bind initially to DnaJ; upon interaction with the DnaJ-bound protein, DnaK hydrolyzes its bound ATP, resulting in the formation of a stable complex. GrpE releases ADP from DnaK; ATP binding to DnaK triggers the release of the substrate protein, thus completing the reaction cycle. Several rounds of ATP-dependent interactions between DnaJ, DnaK and GrpE are required for fully efficient folding. Also involved, together with DnaK and GrpE, in the DNA replication of plasmids through activation of initiation proteins. This chain is Chaperone protein DnaJ, found in Hahella chejuensis (strain KCTC 2396).